Reading from the N-terminus, the 295-residue chain is MHIPDGYLDLSIAGLFYILSIAVLGYSIYRLRGQKLTSLFGIVAAAIFAAQMLNWPIPGGTSAHFVGGALAGILLGPYAGALAMAVVLTIQCLVFADGGITALGANVWNMAIVNVFVGYYVYRAIERFNRSAAAFIAGWIGITLAAIFAGIEIGISTSFGYGLKVTLPVMGTWHALLGLVEGTITAGVVSYIAAARPDVIEQKAAPGKLALAVIAAMIAVSPLFAYAAELVGYSEPLENAAAMLGLEENPIYEGLLPDYTLPGLDPYAGTLIAGIVGTVIVLALGFALTRYARTA.

Transmembrane regions (helical) follow at residues 8–28, 39–59, 70–90, 98–118, 135–155, 175–195, 211–231, and 268–288; these read LDLSIAGLFYILSIAVLGYSI, LFGIVAAAIFAAQMLNWPIPG, LAGILLGPYAGALAMAVVLTI, GGITALGANVWNMAIVNVFVG, FIAGWIGITLAAIFAGIEIGI, ALLGLVEGTITAGVVSYIAAA, LAVIAAMIAVSPLFAYAAELV, and AGTLIAGIVGTVIVLALGFAL.

Belongs to the CbiM family. NikM subfamily.

Its subcellular location is the cell membrane. Its function is as follows. May be involved in nickel transport. This is Putative fused nickel transport protein NikMN from Archaeoglobus fulgidus (strain ATCC 49558 / DSM 4304 / JCM 9628 / NBRC 100126 / VC-16).